Reading from the N-terminus, the 396-residue chain is S-adenosylmethionine synthase (396 aa).

H16 contributes to the ATP binding site. D18 lines the Mg(2+) pocket. E44 contacts K(+). Positions 57 and 100 each coordinate L-methionine. Residues 100–110 form a flexible loop region; the sequence is QSVDIAQGVDR. ATP contacts are provided by residues 165 to 167, D240, 246 to 247, A263, and K267; these read DAK and RK. D240 is an L-methionine binding site. K271 contacts L-methionine.

The protein belongs to the AdoMet synthase family. Homotetramer; dimer of dimers. Requires Mg(2+) as cofactor. K(+) is required as a cofactor.

It localises to the cytoplasm. The catalysed reaction is L-methionine + ATP + H2O = S-adenosyl-L-methionine + phosphate + diphosphate. Its pathway is amino-acid biosynthesis; S-adenosyl-L-methionine biosynthesis; S-adenosyl-L-methionine from L-methionine: step 1/1. Its function is as follows. Catalyzes the formation of S-adenosylmethionine (AdoMet) from methionine and ATP. The overall synthetic reaction is composed of two sequential steps, AdoMet formation and the subsequent tripolyphosphate hydrolysis which occurs prior to release of AdoMet from the enzyme. The protein is S-adenosylmethionine synthase of Pseudomonas savastanoi pv. phaseolicola (strain 1448A / Race 6) (Pseudomonas syringae pv. phaseolicola (strain 1448A / Race 6)).